A 421-amino-acid polypeptide reads, in one-letter code: Putative hydro-lyase KRH_21160 (421 aa).

Disordered stretches follow at residues 200–298 (TWGH…SPVT) and 312–421 (TRAG…AVSR). Residues 224-237 (GSRRRPRWWSRLRR) are compositionally biased toward basic residues. Composition is skewed to low complexity over residues 243 to 260 (PRAT…TRCP) and 370 to 380 (SRGPGPCPRAA).

It belongs to the D-glutamate cyclase family.

The sequence is that of Putative hydro-lyase KRH_21160 from Kocuria rhizophila (strain ATCC 9341 / DSM 348 / NBRC 103217 / DC2201).